A 638-amino-acid chain; its full sequence is Plasma kallikrein (638 aa).

The N-terminal stretch at 1 to 19 (MILFKQVGYFVSLFATVSC) is a signal peptide. Apple domains are found at residues 21-104 (CLSQ…LKQC), 111-194 (CHQD…LKSC), 201-284 (CPMD…LFTC), and 292-375 (CHFK…LRLC). 18 cysteine pairs are disulfide-bonded: cysteine 21–cysteine 104, cysteine 47–cysteine 77, cysteine 51–cysteine 57, cysteine 111–cysteine 194, cysteine 137–cysteine 166, cysteine 141–cysteine 147, cysteine 201–cysteine 284, cysteine 227–cysteine 256, cysteine 231–cysteine 237, cysteine 292–cysteine 375, cysteine 318–cysteine 347, cysteine 322–cysteine 328, cysteine 340–cysteine 345, cysteine 383–cysteine 503, cysteine 419–cysteine 435, cysteine 517–cysteine 584, cysteine 548–cysteine 563, and cysteine 574–cysteine 602. An N-linked (GlcNAc...) asparagine glycan is attached at asparagine 127. Asparagine 215 carries an N-linked (GlcNAc...) asparagine glycan. N-linked (GlcNAc...) asparagine glycosylation is present at asparagine 308. The 236-residue stretch at 391 to 626 (IVGGTNSSLG…YIDWILEKIQ (236 aa)) folds into the Peptidase S1 domain. Asparagine 396 carries N-linked (GlcNAc...) asparagine glycosylation. Histidine 434 functions as the Charge relay system in the catalytic mechanism. The N-linked (GlcNAc...) asparagine glycan is linked to asparagine 453. Aspartate 483 functions as the Charge relay system in the catalytic mechanism. Residue asparagine 494 is glycosylated (N-linked (GlcNAc...) asparagine). Serine 578 (charge relay system) is an active-site residue.

This sequence belongs to the peptidase S1 family. Plasma kallikrein subfamily. Forms a heterodimer with SERPINA5. The zymogen is activated by factor XIIa, which cleaves the molecule into a light chain, which contains the active site, and a heavy chain, which associates with HMW kininogen. These chains are linked by one or more disulfide bonds.

The protein localises to the secreted. It catalyses the reaction Cleaves selectively Arg-|-Xaa and Lys-|-Xaa bonds, including Lys-|-Arg and Arg-|-Ser bonds in (human) kininogen to release bradykinin.. With respect to regulation, inhibited by SERPINA5. The enzyme cleaves Lys-Arg and Arg-Ser bonds. It activates, in a reciprocal reaction, factor XII after its binding to a negatively charged surface. It also releases bradykinin from HMW kininogen and may also play a role in the renin-angiotensin system by converting prorenin into renin. This is Plasma kallikrein (Klkb1) from Rattus norvegicus (Rat).